A 67-amino-acid chain; its full sequence is Small ribosomal subunit protein eS17 (67 aa).

This sequence belongs to the eukaryotic ribosomal protein eS17 family.

The chain is Small ribosomal subunit protein eS17 from Thermococcus onnurineus (strain NA1).